The sequence spans 276 residues: Diaminopimelate epimerase (276 aa).

Substrate is bound by residues N13, Q46, and N66. Residue C75 is the Proton donor of the active site. Substrate contacts are provided by residues 76–77 (GN), N159, N192, and 210–211 (ER). C219 (proton acceptor) is an active-site residue. 220 to 221 (GT) provides a ligand contact to substrate.

Belongs to the diaminopimelate epimerase family. As to quaternary structure, homodimer.

The protein localises to the cytoplasm. The catalysed reaction is (2S,6S)-2,6-diaminopimelate = meso-2,6-diaminopimelate. Its pathway is amino-acid biosynthesis; L-lysine biosynthesis via DAP pathway; DL-2,6-diaminopimelate from LL-2,6-diaminopimelate: step 1/1. Catalyzes the stereoinversion of LL-2,6-diaminopimelate (L,L-DAP) to meso-diaminopimelate (meso-DAP), a precursor of L-lysine and an essential component of the bacterial peptidoglycan. The protein is Diaminopimelate epimerase of Pseudoalteromonas translucida (strain TAC 125).